Here is a 476-residue protein sequence, read N- to C-terminus: Glucose-1-phosphate adenylyltransferase (476 aa).

Residues Tyr-114, Gly-179, 194–195, and Ser-212 each bind alpha-D-glucose 1-phosphate; that span reads EK.

This sequence belongs to the bacterial/plant glucose-1-phosphate adenylyltransferase family. Homotetramer.

It carries out the reaction alpha-D-glucose 1-phosphate + ATP + H(+) = ADP-alpha-D-glucose + diphosphate. Its pathway is glycan biosynthesis; glycogen biosynthesis. In terms of biological role, involved in the biosynthesis of ADP-glucose, a building block required for the elongation reactions to produce glycogen. Catalyzes the reaction between ATP and alpha-D-glucose 1-phosphate (G1P) to produce pyrophosphate and ADP-Glc. In Yersinia pestis bv. Antiqua (strain Antiqua), this protein is Glucose-1-phosphate adenylyltransferase.